We begin with the raw amino-acid sequence, 247 residues long: 2,3-bisphosphoglycerate-dependent phosphoglycerate mutase (247 aa).

Residues 8-15 (RHGESQWN), 21-22 (TG), R60, 87-90 (ERHY), K98, 114-115 (RR), and 183-184 (GN) contribute to the substrate site. H9 functions as the Tele-phosphohistidine intermediate in the catalytic mechanism. E87 acts as the Proton donor/acceptor in catalysis.

It belongs to the phosphoglycerate mutase family. BPG-dependent PGAM subfamily.

The enzyme catalyses (2R)-2-phosphoglycerate = (2R)-3-phosphoglycerate. Its pathway is carbohydrate degradation; glycolysis; pyruvate from D-glyceraldehyde 3-phosphate: step 3/5. Catalyzes the interconversion of 2-phosphoglycerate and 3-phosphoglycerate. This Chlorobaculum parvum (strain DSM 263 / NCIMB 8327) (Chlorobium vibrioforme subsp. thiosulfatophilum) protein is 2,3-bisphosphoglycerate-dependent phosphoglycerate mutase.